A 277-amino-acid polypeptide reads, in one-letter code: Undecaprenyl-diphosphatase (277 aa).

6 consecutive transmembrane segments (helical) span residues 53 to 73 (LGAI…VILG), 85 to 105 (VNLL…ADLI), 108 to 128 (WLFN…VMLW), 183 to 203 (AATE…AAYS), 215 to 235 (GDLP…MLAV), and 250 to 270 (FAWY…LGVV).

This sequence belongs to the UppP family.

Its subcellular location is the cell inner membrane. The enzyme catalyses di-trans,octa-cis-undecaprenyl diphosphate + H2O = di-trans,octa-cis-undecaprenyl phosphate + phosphate + H(+). Its function is as follows. Catalyzes the dephosphorylation of undecaprenyl diphosphate (UPP). Confers resistance to bacitracin. The protein is Undecaprenyl-diphosphatase of Azotobacter vinelandii (strain DJ / ATCC BAA-1303).